A 910-amino-acid chain; its full sequence is Eukaryotic translation initiation factor 3 subunit C (910 aa).

Residues 1–21 are disordered; it reads MSRFFANGSESESESSEEEIQ. Over residues 11–20 the composition is skewed to acidic residues; that stretch reads SESESSEEEI. 4 positions are modified to phosphoserine: serine 34, serine 165, serine 176, and serine 185. Residues 157–281 form a disordered region; the sequence is FREAPDQESE…KRAEDDEDGE (125 aa). The segment covering 162-186 has biased composition (acidic residues); the sequence is DQESEAEDEVVALESDGGDAGDDSD. Residues 193–207 show a composition bias toward low complexity; sequence EAAPKAVKSAPAKAA. Over residues 209–235 the composition is skewed to acidic residues; that stretch reads ADDDDSDDSIDWDSDSESETESSDDEN. Positions 240 to 268 are enriched in basic and acidic residues; the sequence is MRERFLKRTTEKEEKDDDKRKDKRKEQKT. Positions 639–815 constitute a PCI domain; that stretch reads FHMHINLELL…ETVGMHRSEP (177 aa). The segment at 847-910 is disordered; the sequence is FFQRGNMGNR…QQQVQTIDEE (64 aa). Low complexity predominate over residues 862–874; the sequence is NRNQNNQGGNWLG. Residues 882-891 are compositionally biased toward basic residues; the sequence is RNRNQRGHHK. Low complexity predominate over residues 895–910; the sequence is DRQQQQQQQVQTIDEE.

The protein belongs to the eIF-3 subunit C family. Component of the eukaryotic translation initiation factor 3 (eIF-3) complex. The eIF-3 complex interacts with pix.

Its subcellular location is the cytoplasm. In terms of biological role, component of the eukaryotic translation initiation factor 3 (eIF-3) complex, which is involved in protein synthesis of a specialized repertoire of mRNAs and, together with other initiation factors, stimulates binding of mRNA and methionyl-tRNAi to the 40S ribosome. The eIF-3 complex specifically targets and initiates translation of a subset of mRNAs involved in cell proliferation. The sequence is that of Eukaryotic translation initiation factor 3 subunit C from Drosophila sechellia (Fruit fly).